A 620-amino-acid polypeptide reads, in one-letter code: Chaperone protein HscA homolog (620 aa).

Belongs to the heat shock protein 70 family.

Chaperone involved in the maturation of iron-sulfur cluster-containing proteins. Has a low intrinsic ATPase activity which is markedly stimulated by HscB. This Shewanella sp. (strain ANA-3) protein is Chaperone protein HscA homolog.